Consider the following 318-residue polypeptide: Pantothenate kinase (318 aa).

Position 96–103 (96–103) interacts with ATP; that stretch reads GSVAVGKS.

It belongs to the prokaryotic pantothenate kinase family.

The protein resides in the cytoplasm. The catalysed reaction is (R)-pantothenate + ATP = (R)-4'-phosphopantothenate + ADP + H(+). It functions in the pathway cofactor biosynthesis; coenzyme A biosynthesis; CoA from (R)-pantothenate: step 1/5. The protein is Pantothenate kinase of Nitrobacter hamburgensis (strain DSM 10229 / NCIMB 13809 / X14).